The chain runs to 363 residues: Flagellar P-ring protein (363 aa).

The signal sequence occupies residues 1–20 (MKKLTLVLFGMLFLASSAHA).

Belongs to the FlgI family. The basal body constitutes a major portion of the flagellar organelle and consists of four rings (L,P,S, and M) mounted on a central rod.

It localises to the periplasm. The protein localises to the bacterial flagellum basal body. Functionally, assembles around the rod to form the L-ring and probably protects the motor/basal body from shearing forces during rotation. The protein is Flagellar P-ring protein of Vibrio atlanticus (strain LGP32) (Vibrio splendidus (strain Mel32)).